A 118-amino-acid polypeptide reads, in one-letter code: Non-specific lipid-transfer protein 1 (118 aa).

The signal sequence occupies residues 1 to 20 (MARLAVAIAVVAAVVVVLAA). Cystine bridges form between Cys-29/Cys-77, Cys-39/Cys-54, Cys-55/Cys-100, and Cys-75/Cys-114.

It belongs to the plant LTP family.

Functionally, plant non-specific lipid-transfer proteins transfer phospholipids as well as galactolipids across membranes. May play a role in wax or cutin deposition in the cell walls of expanding epidermal cells and certain secretory tissues. The protein is Non-specific lipid-transfer protein 1 (LTP1) of Sorghum bicolor (Sorghum).